A 181-amino-acid polypeptide reads, in one-letter code: Urease accessory protein UreE (181 aa).

Positions 143-181 are disordered; sequence FDPEPGAYNQAGQGHSHGHSHGHSHNHDHEHSHGHKHAH.

The protein belongs to the UreE family.

It is found in the cytoplasm. In terms of biological role, involved in urease metallocenter assembly. Binds nickel. Probably functions as a nickel donor during metallocenter assembly. In Marinobacter nauticus (strain ATCC 700491 / DSM 11845 / VT8) (Marinobacter aquaeolei), this protein is Urease accessory protein UreE.